The primary structure comprises 235 residues: Uridylate kinase (235 aa).

9-12 (KLSG) lines the ATP pocket. Gly-51 contributes to the UMP binding site. Residues Gly-52 and Arg-56 each coordinate ATP. Residues Asp-71 and 133–140 (SGNPFFTT) each bind UMP. ATP contacts are provided by Thr-160, Tyr-166, and Asp-169.

Belongs to the UMP kinase family. Homohexamer.

The protein resides in the cytoplasm. The catalysed reaction is UMP + ATP = UDP + ADP. It participates in pyrimidine metabolism; CTP biosynthesis via de novo pathway; UDP from UMP (UMPK route): step 1/1. With respect to regulation, inhibited by UTP. Catalyzes the reversible phosphorylation of UMP to UDP. The protein is Uridylate kinase of Gloeobacter violaceus (strain ATCC 29082 / PCC 7421).